The primary structure comprises 335 residues: Ubiquinone biosynthesis protein COQ4, mitochondrial (335 aa).

A mitochondrion-targeting transit peptide spans 1 to 10; it reads MLRLSLLRST. Zn(2+)-binding residues include His210, Asp211, His214, and Glu226.

This sequence belongs to the COQ4 family. As to quaternary structure, component of a multi-subunit COQ enzyme complex, composed of at least COQ3, COQ4, COQ5, COQ6, COQ7 and COQ9. Interacts with COQ3. The cofactor is Zn(2+).

It is found in the mitochondrion inner membrane. It carries out the reaction 4-hydroxy-3-methoxy-5-(all-trans-hexaprenyl)benzoate + H(+) = 2-methoxy-6-(all-trans-hexaprenyl)phenol + CO2. Its pathway is cofactor biosynthesis; ubiquinone biosynthesis. In terms of biological role, lyase that catalyzes the C1-decarboxylation of 4-hydroxy-3-methoxy-5-(all-trans-hexaprenyl)benzoic acid into 2-methoxy-6-(all-trans-hexaprenyl)phenol during ubiquinone biosynthesis. This is Ubiquinone biosynthesis protein COQ4, mitochondrial from Saccharomyces cerevisiae (strain AWRI1631) (Baker's yeast).